The primary structure comprises 257 residues: 7-carboxy-7-deazaguanine synthase (257 aa).

Residues Leu-29 to Gly-31 and Arg-44 each bind substrate. Residues Leu-35–Asp-253 form the Radical SAM core domain. 3 residues coordinate [4Fe-4S] cluster: Cys-48, Cys-52, and Cys-55. Ser-57 is a binding site for Mg(2+). Thr-90 contacts substrate. An S-adenosyl-L-methionine-binding site is contributed by Gly-92. The tract at residues Val-133–Glu-153 is disordered.

This sequence belongs to the radical SAM superfamily. 7-carboxy-7-deazaguanine synthase family. Homodimer. Requires [4Fe-4S] cluster as cofactor. S-adenosyl-L-methionine is required as a cofactor. The cofactor is Mg(2+).

It carries out the reaction 6-carboxy-5,6,7,8-tetrahydropterin + H(+) = 7-carboxy-7-deazaguanine + NH4(+). It functions in the pathway purine metabolism; 7-cyano-7-deazaguanine biosynthesis. Catalyzes the complex heterocyclic radical-mediated conversion of 6-carboxy-5,6,7,8-tetrahydropterin (CPH4) to 7-carboxy-7-deazaguanine (CDG), a step common to the biosynthetic pathways of all 7-deazapurine-containing compounds. In Halobacterium salinarum (strain ATCC 29341 / DSM 671 / R1), this protein is 7-carboxy-7-deazaguanine synthase.